Here is a 525-residue protein sequence, read N- to C-terminus: GMP synthase [glutamine-hydrolyzing] (525 aa).

Residues 13-202 (TILVLDFGSQ…AVEICQAAQT (190 aa)) form the Glutamine amidotransferase type-1 domain. Cys89 (nucleophile) is an active-site residue. Catalysis depends on residues His176 and Glu178. The region spanning 203–400 (WTMENFIDTE…LGISHELVWR (198 aa)) is the GMPS ATP-PPase domain. Residue 231–237 (SGGVDST) coordinates ATP. XMP is bound by residues Arg304, Asp462, Lys517, and Glu523.

Homodimer. Mg(2+) serves as cofactor.

It is found in the cytoplasm. Its subcellular location is the cytosol. The catalysed reaction is XMP + L-glutamine + ATP + H2O = GMP + L-glutamate + AMP + diphosphate + 2 H(+). It participates in purine metabolism; GMP biosynthesis; GMP from XMP (L-Gln route): step 1/1. Its function is as follows. Catalyzes the conversion of xanthine monophosphate (XMP) to GMP in the presence of glutamine and ATP through an adenyl-XMP intermediate. In Eremothecium gossypii (strain ATCC 10895 / CBS 109.51 / FGSC 9923 / NRRL Y-1056) (Yeast), this protein is GMP synthase [glutamine-hydrolyzing] (GUA1).